The following is a 158-amino-acid chain: MSSKEQEAQKGKQGWITPTVIPPEEWATFRYRGKTLEELLNMSMDEFIKLLPARQRRSLKRGLKPEHRKLLEKIRKAKRLAAQGKKVVIRTHCRDMIILPEMVGLTIHVYNGITYIPVFISPWHIGHYLGEFALTTKIVQHGEPGLKATRSSLHIAAK.

It belongs to the universal ribosomal protein uS19 family.

Its function is as follows. Protein S19 forms a complex with S13 that binds strongly to the 16S ribosomal RNA. This Pyrobaculum aerophilum (strain ATCC 51768 / DSM 7523 / JCM 9630 / CIP 104966 / NBRC 100827 / IM2) protein is Small ribosomal subunit protein uS19.